A 349-amino-acid chain; its full sequence is Protein RecA (349 aa).

66 to 73 (GPESSGKT) serves as a coordination point for ATP.

The protein belongs to the RecA family.

Its subcellular location is the cytoplasm. In terms of biological role, can catalyze the hydrolysis of ATP in the presence of single-stranded DNA, the ATP-dependent uptake of single-stranded DNA by duplex DNA, and the ATP-dependent hybridization of homologous single-stranded DNAs. It interacts with LexA causing its activation and leading to its autocatalytic cleavage. This is Protein RecA from Psychrobacter sp. (strain PRwf-1).